Consider the following 591-residue polypeptide: Complement component C8 beta chain (591 aa).

The N-terminal stretch at 1–32 is a signal peptide; the sequence is MKNSRTWAWRAPVELFLLCAALGCLSLPGSRG. A propeptide spanning residues 33–54 is cleaved from the precursor; sequence ERPHSFGSNAVNKSFAKSRQMR. The 54-residue stretch at 64-117 folds into the TSP type-1 1 domain; that stretch reads DCELSSWSSWTTCDPCQKKRYRYAYLLQPSQFHGEPCNFSDKEVEDCVTNRPCG. 7 disulfide bridges follow: cysteine 65–cysteine 100, cysteine 76–cysteine 110, cysteine 79–cysteine 116, cysteine 122–cysteine 133, cysteine 127–cysteine 146, cysteine 140–cysteine 155, and cysteine 162–cysteine 200. 2 C-linked (Man) tryptophan glycosylation sites follow: tryptophan 70 and tryptophan 73. A glycan (N-linked (GlcNAc...) asparagine) is linked at asparagine 101. The region spanning 120–157 is the LDL-receptor class A domain; the sequence is VRCEGFVCAQTGRCVNRRLLCNGDNDCGDQSDEANCRR. Ca(2+) is bound by residues leucine 138, asparagine 141, aspartate 143, aspartate 145, aspartate 151, and glutamate 152. The MACPF domain occupies 158–504; that stretch reads IYKKCQHEMD…EFQKEVSSCH (347 aa). Asparagine 243 carries N-linked (GlcNAc...) asparagine glycosylation. 4 beta stranded membrane passes run 252–259, 262–269, 379–386, and 392–399; these read SGFSFGFK, GIFELGIS, AKNDFKIG, and VYVSLGVS. A disulfide bond links cysteine 378 and cysteine 403. Threonine 418 carries the phosphothreonine modification. 4 cysteine pairs are disulfide-bonded: cysteine 503-cysteine 550, cysteine 505-cysteine 521, cysteine 508-cysteine 523, and cysteine 525-cysteine 534. Residues 505–535 enclose the EGF-like domain; that stretch reads CAPCQGNGVPVLKGSRCDCICPVGSQGLACE. Residues 545 to 591 form the TSP type-1 2 domain; sequence DGKWNCWSNWSSCSGRRKTRQRQCNNPPPQNGGSPCSGPASETLDCS. Tryptophan 551 and tryptophan 554 each carry a C-linked (Man) tryptophan glycan. Cysteine 557 and cysteine 590 are disulfide-bonded. The tract at residues 568–591 is disordered; the sequence is CNNPPPQNGGSPCSGPASETLDCS.

It belongs to the complement C6/C7/C8/C9 family. In terms of assembly, heterotrimer of 3 chains: alpha (C8A), beta (C8B) and gamma (C8G); the alpha and gamma chains are disulfide bonded. Component of the membrane attack complex (MAC), composed of complement C5b, C6, C7, C8A, C8B, C8G and multiple copies of the pore-forming subunit C9. In terms of processing, N-glycosylated; contains one or two bound glycans. Not O-glycosylated.

It localises to the secreted. It is found in the target cell membrane. Its activity is regulated as follows. Membrane attack complex (MAC) assembly is inhibited by CD59, thereby protecting self-cells from damage during complement activation. CD59 acts by binding to the beta-haipins of C8 (C8A and C8B), forming an intermolecular beta-sheet that prevents incorporation of the multiple copies of C9 required for complete formation of the osmolytic pore. MAC assembly is also inhibited by clusterin (CLU) chaperones that inhibit polymerization of C9. Component of the membrane attack complex (MAC), a multiprotein complex activated by the complement cascade, which inserts into a target cell membrane and forms a pore, leading to target cell membrane rupture and cell lysis. The MAC is initiated by proteolytic cleavage of C5 into complement C5b in response to the classical, alternative, lectin and GZMK complement pathways. The complement pathways consist in a cascade of proteins that leads to phagocytosis and breakdown of pathogens and signaling that strengthens the adaptive immune system. C8B, together with C8A and C8G, inserts into the target membrane, but does not form pores by itself. During MAC assembly, associates with C5b, C6 and C7 to form the C5b8 intermediate complex that inserts into the target membrane and traverses the bilayer increasing membrane rigidity. This Homo sapiens (Human) protein is Complement component C8 beta chain.